The primary structure comprises 220 residues: Ribosomal RNA small subunit methyltransferase G 1 (220 aa).

The S-adenosyl-L-methionine site is built by Gly-79, Phe-84, and Arg-150.

This sequence belongs to the methyltransferase superfamily. RNA methyltransferase RsmG family.

The protein resides in the cytoplasm. The enzyme catalyses guanosine(527) in 16S rRNA + S-adenosyl-L-methionine = N(7)-methylguanosine(527) in 16S rRNA + S-adenosyl-L-homocysteine. In terms of biological role, specifically methylates the N7 position of guanine in position 527 of 16S rRNA. The sequence is that of Ribosomal RNA small subunit methyltransferase G 1 from Syntrophobacter fumaroxidans (strain DSM 10017 / MPOB).